Consider the following 227-residue polypeptide: Apoptosis regulator OPG045 (227 aa).

Belongs to the orthopoxvirus OPG045 family. As to quaternary structure, homodimer. Interacts with host pro-apoptotic protein BCL2L11 (via BH3 domain). Interacts with host NLRP1. Interacts with host BAK.

It is found in the host mitochondrion outer membrane. It localises to the host cytoplasm. Its function is as follows. Plays a role in evading host innate immune response by inhibiting host inflammasome activation. Interacts with and inhibits NLR-mediated interleukin-1 beta/IL1B production in infected cells. At the host mitochondria outer membrane, interacts with the BH3 domain of host BAK and prevents BAK from binding active BAX. In turn, host apoptosis is inhibited. This Oryctolagus cuniculus (Rabbit) protein is Apoptosis regulator OPG045 (OPG045).